Reading from the N-terminus, the 99-residue chain is Aspartyl/glutamyl-tRNA(Asn/Gln) amidotransferase subunit C (99 aa).

The protein belongs to the GatC family. As to quaternary structure, heterotrimer of A, B and C subunits.

It catalyses the reaction L-glutamyl-tRNA(Gln) + L-glutamine + ATP + H2O = L-glutaminyl-tRNA(Gln) + L-glutamate + ADP + phosphate + H(+). It carries out the reaction L-aspartyl-tRNA(Asn) + L-glutamine + ATP + H2O = L-asparaginyl-tRNA(Asn) + L-glutamate + ADP + phosphate + 2 H(+). Its function is as follows. Allows the formation of correctly charged Asn-tRNA(Asn) or Gln-tRNA(Gln) through the transamidation of misacylated Asp-tRNA(Asn) or Glu-tRNA(Gln) in organisms which lack either or both of asparaginyl-tRNA or glutaminyl-tRNA synthetases. The reaction takes place in the presence of glutamine and ATP through an activated phospho-Asp-tRNA(Asn) or phospho-Glu-tRNA(Gln). The chain is Aspartyl/glutamyl-tRNA(Asn/Gln) amidotransferase subunit C from Albidiferax ferrireducens (strain ATCC BAA-621 / DSM 15236 / T118) (Rhodoferax ferrireducens).